The sequence spans 96 residues: GTPase HRas (96 aa).

Met1 carries the post-translational modification N-acetylmethionine. Thr2 carries the N-acetylthreonine; in GTPase HRas, N-terminally processed modification. Residue 10–17 (GAGGVGKS) participates in GTP binding. Residues 32 to 40 (YDPTIEDSY) carry the Effector region motif. 57 to 61 (DTAGQ) lines the GTP pocket.

Belongs to the small GTPase superfamily. Ras family. In its GTP-bound form interacts with PLCE1. Interacts with TBC1D10C. Interacts with RGL3. Interacts with HSPD1. Found in a complex with at least BRAF, HRAS, MAP2K1, MAPK3 and RGS14. Interacts (active GTP-bound form) with RGS14 (via RBD 1 domain). Forms a signaling complex with RASGRP1 and DGKZ. Interacts with RASSF5. Interacts with PDE6D. Interacts with IKZF3. Interacts with RACK1. Interacts with PIK3CG; the interaction is required for membrane recruitment and beta-gamma G protein dimer-dependent activation of the PI3K gamma complex PIK3CG:PIK3R6. Interacts with RAPGEF2. Interacts (active GTP-bound form) with both SHOC2 and PP1c (all isoforms) to form a tertiary complex; SHOC2 and PP1c preferably bind M-Ras/MRAS, but they also bind K-Ras/KRAS, N-Ras/NRAS and H-Ras/HRAS. Interacts (in GTP-bound form) with Oog1. Interacts (GTP-bound form) with MAPKAP1/SIN1; inhibiting H-Ras/HRAS activity. Post-translationally, ubiquitinated by the BCR(LZTR1) E3 ubiquitin ligase complex at Lys-170 in a non-degradative manner, leading to inhibit Ras signaling by decreasing Ras association with membranes.

The protein resides in the cell membrane. It is found in the golgi apparatus. It localises to the golgi apparatus membrane. It carries out the reaction GTP + H2O = GDP + phosphate + H(+). Alternates between an inactive form bound to GDP and an active form bound to GTP. Activated by a guanine nucleotide-exchange factor (GEF) and inactivated by a GTPase-activating protein (GAP). Its function is as follows. Ras proteins bind GDP/GTP and possess intrinsic GTPase activity. In Mesocricetus auratus (Golden hamster), this protein is GTPase HRas (HRAS).